Consider the following 201-residue polypeptide: UPF0301 protein Smed_0532 (201 aa).

Belongs to the UPF0301 (AlgH) family.

This is UPF0301 protein Smed_0532 from Sinorhizobium medicae (strain WSM419) (Ensifer medicae).